A 183-amino-acid chain; its full sequence is NADH-quinone oxidoreductase subunit I (183 aa).

2 consecutive 4Fe-4S ferredoxin-type domains span residues 44–74 and 90–119; these read LNRW…VEAG and RVYQ…MTNE. [4Fe-4S] cluster-binding residues include cysteine 54, cysteine 57, cysteine 60, cysteine 64, cysteine 99, cysteine 102, cysteine 105, and cysteine 109. The disordered stretch occupies residues 143–183; the sequence is QGMEAPPHPMRLGETEKDYYRLGRDDNAAARADEQNSEAVQ. Residues 153–176 show a composition bias toward basic and acidic residues; it reads RLGETEKDYYRLGRDDNAAARADE.

It belongs to the complex I 23 kDa subunit family. NDH-1 is composed of 14 different subunits. Subunits NuoA, H, J, K, L, M, N constitute the membrane sector of the complex. The cofactor is [4Fe-4S] cluster.

It localises to the cell membrane. It carries out the reaction a quinone + NADH + 5 H(+)(in) = a quinol + NAD(+) + 4 H(+)(out). Its function is as follows. NDH-1 shuttles electrons from NADH, via FMN and iron-sulfur (Fe-S) centers, to quinones in the respiratory chain. The immediate electron acceptor for the enzyme in this species is believed to be ubiquinone. Couples the redox reaction to proton translocation (for every two electrons transferred, four hydrogen ions are translocated across the cytoplasmic membrane), and thus conserves the redox energy in a proton gradient. This Thermobifida fusca (strain YX) protein is NADH-quinone oxidoreductase subunit I.